The primary structure comprises 310 residues: Prephenate dehydratase (310 aa).

In terms of domain architecture, Prephenate dehydratase spans 3 to 190 (RIAYLGPEGT…ARTRFVLVGL (188 aa)). The region spanning 204 to 281 (AVVLRLVNEP…VDVRYLGSWP (78 aa)) is the ACT domain.

In terms of assembly, homodimer.

The enzyme catalyses prephenate + H(+) = 3-phenylpyruvate + CO2 + H2O. It participates in amino-acid biosynthesis; L-phenylalanine biosynthesis; phenylpyruvate from prephenate: step 1/1. The protein is Prephenate dehydratase (pheA) of Mycolicibacterium smegmatis (strain ATCC 700084 / mc(2)155) (Mycobacterium smegmatis).